We begin with the raw amino-acid sequence, 380 residues long: Cytochrome b (380 aa).

4 helical membrane-spanning segments follow: residues 33–53 (FGSL…FLAM), 77–98 (WLIR…YLHV), 113–133 (WNIG…GYVL), and 178–198 (FFAF…IHLL). H83 and H97 together coordinate heme b. Heme b is bound by residues H182 and H196. H201 contacts a ubiquinone. Transmembrane regions (helical) follow at residues 226 to 246 (YKDL…ALFS), 288 to 308 (LGGV…PMLH), 320 to 340 (LSQI…WIGG), and 347 to 367 (FVLI…IALP).

It belongs to the cytochrome b family. The cytochrome bc1 complex contains 3 respiratory subunits (MT-CYB, CYC1 and UQCRFS1), 2 core proteins (UQCRC1 and UQCRC2) and probably 6 low-molecular weight proteins. Heme b is required as a cofactor.

The protein resides in the mitochondrion inner membrane. Functionally, component of the ubiquinol-cytochrome c reductase complex (complex III or cytochrome b-c1 complex) that is part of the mitochondrial respiratory chain. The b-c1 complex mediates electron transfer from ubiquinol to cytochrome c. Contributes to the generation of a proton gradient across the mitochondrial membrane that is then used for ATP synthesis. The polypeptide is Cytochrome b (mt-cyb) (Acipenser transmontanus (White sturgeon)).